A 269-amino-acid chain; its full sequence is Undecaprenyl-diphosphatase (269 aa).

6 helical membrane passes run 43–63 (KGKV…CWEY), 82–102 (FILN…LLHG), 108–128 (LFSS…ILLV), 188–208 (ATEF…FYDV), 222–242 (MFAV…KTLI), and 249–269 (DFKG…AYYW).

This sequence belongs to the UppP family.

The protein localises to the cell inner membrane. It carries out the reaction di-trans,octa-cis-undecaprenyl diphosphate + H2O = di-trans,octa-cis-undecaprenyl phosphate + phosphate + H(+). Its function is as follows. Catalyzes the dephosphorylation of undecaprenyl diphosphate (UPP). Confers resistance to bacitracin. The sequence is that of Undecaprenyl-diphosphatase from Methylobacillus flagellatus (strain ATCC 51484 / DSM 6875 / VKM B-1610 / KT).